Here is a 142-residue protein sequence, read N- to C-terminus: Hemoglobin subunit zeta (142 aa).

At serine 2 the chain carries N-acetylserine. In terms of domain architecture, Globin spans 2-142; it reads SLTKTEGTII…VSSVLTEKYR (141 aa). A Phosphothreonine modification is found at threonine 29. Serine 53 carries the post-translational modification Phosphoserine. Residue histidine 59 participates in heme b binding. Serine 73 and serine 82 each carry phosphoserine. A heme b-binding site is contributed by histidine 88.

Belongs to the globin family. In terms of assembly, heterotetramer of two zeta chains and beta-type chains.

Its function is as follows. The zeta chain is an alpha-type chain of mammalian embryonic hemoglobin. The polypeptide is Hemoglobin subunit zeta (HBZ1) (Pan troglodytes (Chimpanzee)).